We begin with the raw amino-acid sequence, 383 residues long: MSKQKVVVGMSGGVDSSVTAWLLKEQGYDVVGLFMKNWEDDDDSEYCSTRQDWIDVVSVADLIGIDVEAVNFAAEYKDRVFAEFLREYSAGRTPNPDVLCNAEIKFKAFLDHAMSLGAETIATGHYARVRQNERNGRFELLKAFDHTKDQSYFLHRLNQAQLSKTLFPLGEIPKTKVREIAEQIALPNAKKKDSTGICFIGERPFRDFLNRYLPTKPGPMKTTDGKVVGEHIGLAFYTFGQRKGIGLGGSKDGSGEPWFVAGKDIASNTLYVAQGHDHAWLLSHTLSAGNTSWVAGEPPADGFACGAKTRYRQADAPCTFSSAGSGEGLFELNFDAAQWAVTPGQSAVLYDGDVCLGGGIIEHAVTGQPVAREPQKAALLNAR.

Residues 9–16 (GMSGGVDS) and Met35 contribute to the ATP site. Positions 95–97 (NPD) are interaction with target base in tRNA. The Nucleophile role is filled by Cys100. A disulfide bridge connects residues Cys100 and Cys198. An ATP-binding site is contributed by Gly124. The tract at residues 148 to 150 (KDQ) is interaction with tRNA. Cys198 serves as the catalytic Cysteine persulfide intermediate. Residues 310 to 311 (RY) are interaction with tRNA.

Belongs to the MnmA/TRMU family.

The protein resides in the cytoplasm. The catalysed reaction is S-sulfanyl-L-cysteinyl-[protein] + uridine(34) in tRNA + AH2 + ATP = 2-thiouridine(34) in tRNA + L-cysteinyl-[protein] + A + AMP + diphosphate + H(+). Functionally, catalyzes the 2-thiolation of uridine at the wobble position (U34) of tRNA, leading to the formation of s(2)U34. In Paraburkholderia phytofirmans (strain DSM 17436 / LMG 22146 / PsJN) (Burkholderia phytofirmans), this protein is tRNA-specific 2-thiouridylase MnmA.